The chain runs to 255 residues: Hemin import ATP-binding protein HmuV (255 aa).

One can recognise an ABC transporter domain in the interval 2–238 (LQVEGLYLCR…AALKAVYGID (237 aa)). Residue 34–41 (GPNGAGKS) coordinates ATP.

This sequence belongs to the ABC transporter superfamily. Heme (hemin) importer (TC 3.A.1.14.5) family. As to quaternary structure, the complex is composed of two ATP-binding proteins (HmuV), two transmembrane proteins (HmuU) and a solute-binding protein (HmuT).

It localises to the cell inner membrane. Functionally, part of the ABC transporter complex HmuTUV involved in hemin import. Responsible for energy coupling to the transport system. This is Hemin import ATP-binding protein HmuV from Pseudomonas putida (strain ATCC 47054 / DSM 6125 / CFBP 8728 / NCIMB 11950 / KT2440).